The following is a 144-amino-acid chain: Large-conductance mechanosensitive channel (144 aa).

The next 2 helical transmembrane spans lie at 16 to 36 (VIDLAVGVIIGAAFGKIVDSV) and 86 to 106 (GNFLTIVVNFVILAFIIFLMV).

Belongs to the MscL family. In terms of assembly, homopentamer.

It is found in the cell inner membrane. Channel that opens in response to stretch forces in the membrane lipid bilayer. May participate in the regulation of osmotic pressure changes within the cell. The polypeptide is Large-conductance mechanosensitive channel (Cupriavidus pinatubonensis (strain JMP 134 / LMG 1197) (Cupriavidus necator (strain JMP 134))).